The primary structure comprises 94 residues: Acylphosphatase (94 aa).

The Acylphosphatase-like domain occupies 8–94 (HIRAWVSGKV…ETPPLGFEVC (87 aa)). Catalysis depends on residues arginine 23 and asparagine 41.

It belongs to the acylphosphatase family.

The enzyme catalyses an acyl phosphate + H2O = a carboxylate + phosphate + H(+). This Hahella chejuensis (strain KCTC 2396) protein is Acylphosphatase (acyP).